Reading from the N-terminus, the 524-residue chain is Serine/threonine-protein phosphatase 2A 56 kDa regulatory subunit gamma isoform (524 aa).

An N-acetylmethionine modification is found at M1. The interval 476–508 (SDEARQAQKELKKDRPLVRRKSELPQDPHTEKA) is disordered.

It belongs to the phosphatase 2A regulatory subunit B56 family. As to quaternary structure, PP2A consists of a common heterodimeric core enzyme, composed of PPP2CA a 36 kDa catalytic subunit (subunit C) and PPP2R1A a 65 kDa constant regulatory subunit (PR65 or subunit A), that associates with a variety of regulatory subunits. Proteins that associate with the core dimer include three families of regulatory subunits B (the R2/B/PR55/B55, R3/B''/PR72/PR130/PR59 and R5/B'/B56 families), the 48 kDa variable regulatory subunit, viral proteins, and cell signaling molecules. Interacts with SGO1. Interacts with SGO1; the interaction is direct. May interact with TP53. Interacts with IER3 and/or ERK kinases; regulates ERK dephosphorylation. Interacts with CIP2A; this interaction stabilizes CIP2A. Highest levels in heart, liver and brain. Lower levels in skeletal muscle, spleen, kidney and lung. Isoform 4 is testis-specific.

The protein localises to the nucleus. It is found in the chromosome. The protein resides in the centromere. Its function is as follows. The B regulatory subunit might modulate substrate selectivity and catalytic activity, and might also direct the localization of the catalytic enzyme to a particular subcellular compartment. The PP2A-PPP2R5C holoenzyme may activate TP53 and play a role in DNA damage-induced inhibition of cell proliferation. PP2A-PPP2R5C may also regulate the ERK signaling pathway through ERK dephosphorylation. The chain is Serine/threonine-protein phosphatase 2A 56 kDa regulatory subunit gamma isoform (Ppp2r5c) from Mus musculus (Mouse).